We begin with the raw amino-acid sequence, 73 residues long: UPF0235 protein PERMA_1406 (73 aa).

This sequence belongs to the UPF0235 family.

The protein is UPF0235 protein PERMA_1406 of Persephonella marina (strain DSM 14350 / EX-H1).